The chain runs to 477 residues: Stromelysin-1 (477 aa).

Residues 1–17 (MKGLPVLLWLCVVVCSS) form the signal peptide. Positions 18–99 (YPLHDSARDD…PRCGVPDVGG (82 aa)) are cleaved as a propeptide — activation peptide. A Cysteine switch motif is present at residues 90–97 (PRCGVPDV). Residue cysteine 92 coordinates Zn(2+). Aspartate 124 and aspartate 158 together coordinate Ca(2+). Residues histidine 168 and aspartate 170 each contribute to the Zn(2+) site. Residues aspartate 175, glycine 176, glycine 178, and valine 180 each contribute to the Ca(2+) site. Zn(2+) is bound at residue histidine 183. Ca(2+) is bound by residues glycine 190, asparagine 192, and aspartate 194. Residue histidine 196 participates in Zn(2+) binding. Positions 198, 199, and 201 each coordinate Ca(2+). Residue histidine 218 participates in Zn(2+) binding. Glutamate 219 is an active-site residue. Positions 222 and 228 each coordinate Zn(2+). Hemopexin repeat units lie at residues 287–336 (SPMC…WPSL), 337–383 (PSNM…GLPA), 385–433 (VKKI…FPGV), and 434–477 (DSRV…WFNC). A disulfide bridge links cysteine 290 with cysteine 477. Aspartate 297 contributes to the Ca(2+) binding site. Aspartate 389 and aspartate 438 together coordinate Ca(2+).

Belongs to the peptidase M10A family. Requires Ca(2+) as cofactor. Zn(2+) is required as a cofactor.

The protein localises to the secreted. It is found in the extracellular space. The protein resides in the extracellular matrix. The enzyme catalyses Preferential cleavage where P1', P2' and P3' are hydrophobic residues.. Metalloproteinase with a rather broad substrate specificity that can degrade fibronectin, laminin, gelatins of type I, III, IV, and V; collagens III, IV, X, and IX, and cartilage proteoglycans. Activates different molecules including growth factors, plasminogen or other matrix metalloproteinases such as MMP9. Once released into the extracellular matrix (ECM), the inactive pro-enzyme is activated by the plasmin cascade signaling pathway. Also acts intracellularly. For example, in dopaminergic neurons, gets activated by the serine protease HTRA2 upon stress and plays a pivotal role in DA neuronal degeneration by mediating microglial activation and alpha-synuclein/SNCA cleavage. In addition, plays a role in immune response and possesses antiviral activity against various viruses. Mechanistically, translocates from the cytoplasm into the cell nucleus upon virus infection to influence NF-kappa-B activities. In Mus musculus (Mouse), this protein is Stromelysin-1 (Mmp3).